The following is a 523-amino-acid chain: uncharacterized protein (523 aa).

This is an uncharacterized protein from Saccharomyces cerevisiae (strain ATCC 204508 / S288c) (Baker's yeast).